Reading from the N-terminus, the 792-residue chain is Phenylalanine--tRNA ligase beta subunit (792 aa).

Residues 39-147 (AAAFSGVVVG…DNAPIGQDIR (109 aa)) enclose the tRNA-binding domain. Residues 400–475 (PERPAVRLRP…RLHGYDAIPA (76 aa)) form the B5 domain. Residues aspartate 453, aspartate 459, glutamate 462, and glutamate 463 each coordinate Mg(2+). The 94-residue stretch at 698–791 (SRQPAVTRDV…TETSLGARLR (94 aa)) folds into the FDX-ACB domain.

Belongs to the phenylalanyl-tRNA synthetase beta subunit family. Type 1 subfamily. In terms of assembly, tetramer of two alpha and two beta subunits. It depends on Mg(2+) as a cofactor.

The protein resides in the cytoplasm. It catalyses the reaction tRNA(Phe) + L-phenylalanine + ATP = L-phenylalanyl-tRNA(Phe) + AMP + diphosphate + H(+). This is Phenylalanine--tRNA ligase beta subunit from Aromatoleum aromaticum (strain DSM 19018 / LMG 30748 / EbN1) (Azoarcus sp. (strain EbN1)).